The following is a 450-amino-acid chain: Sorting nexin-4 (450 aa).

An N-acetylmethionine modification is found at Met1. Residues 1 to 46 (MEQAPPDPERQLQPAPLEPLGSPDAVLGAAVGKETEGAGEESSGVD) are disordered. Phosphoserine is present on Ser22. The PX domain occupies 61 to 187 (SVSEAEKRTG…YLFLTQEGNW (127 aa)). A 1,2-diacyl-sn-glycero-3-phospho-(1D-myo-inositol-3-phosphate) contacts are provided by Arg106, Ser108, Lys132, and Arg154.

This sequence belongs to the sorting nexin family. In terms of assembly, heterodimer; heterodimerizes with SNX7 or SNX30. Interacts with WWC1/KIBRA. Identified in a complex with WWC1/KIBRA and dynein components DYNLL1 and DYNC1I2. Interacts with BIN1.

The protein localises to the early endosome. It is found in the early endosome membrane. Its function is as follows. Involved in the regulation of endocytosis and in several stages of intracellular trafficking. Plays a role in recycling endocytosed transferrin receptor and prevent its degradation. Involved in autophagosome assembly by regulating trafficking and recycling of phospholipid scramblase ATG9A. The protein is Sorting nexin-4 of Pongo abelii (Sumatran orangutan).